Consider the following 356-residue polypeptide: tRNA N6-adenosine threonylcarbamoyltransferase (356 aa).

Residues H115 and H119 each contribute to the Fe cation site. Substrate-binding positions include 138 to 142, D171, G184, and N283; that span reads LVSGG. D311 provides a ligand contact to Fe cation.

The protein belongs to the KAE1 / TsaD family. Fe(2+) serves as cofactor.

The protein localises to the cytoplasm. The enzyme catalyses L-threonylcarbamoyladenylate + adenosine(37) in tRNA = N(6)-L-threonylcarbamoyladenosine(37) in tRNA + AMP + H(+). Required for the formation of a threonylcarbamoyl group on adenosine at position 37 (t(6)A37) in tRNAs that read codons beginning with adenine. Is involved in the transfer of the threonylcarbamoyl moiety of threonylcarbamoyl-AMP (TC-AMP) to the N6 group of A37, together with TsaE and TsaB. TsaD likely plays a direct catalytic role in this reaction. This chain is tRNA N6-adenosine threonylcarbamoyltransferase, found in Prochlorococcus marinus subsp. pastoris (strain CCMP1986 / NIES-2087 / MED4).